We begin with the raw amino-acid sequence, 270 residues long: Formamidopyrimidine-DNA glycosylase (270 aa).

Pro2 serves as the catalytic Schiff-base intermediate with DNA. The active-site Proton donor is Glu3. Lys58 acts as the Proton donor; for beta-elimination activity in catalysis. Positions 91, 110, and 151 each coordinate DNA. The FPG-type zinc finger occupies 236-270 (FVYGRGGENCKVCGTGLREIKLGQRASVYCPRCQS). Arg260 serves as the catalytic Proton donor; for delta-elimination activity.

This sequence belongs to the FPG family. Monomer. It depends on Zn(2+) as a cofactor.

It catalyses the reaction Hydrolysis of DNA containing ring-opened 7-methylguanine residues, releasing 2,6-diamino-4-hydroxy-5-(N-methyl)formamidopyrimidine.. The enzyme catalyses 2'-deoxyribonucleotide-(2'-deoxyribose 5'-phosphate)-2'-deoxyribonucleotide-DNA = a 3'-end 2'-deoxyribonucleotide-(2,3-dehydro-2,3-deoxyribose 5'-phosphate)-DNA + a 5'-end 5'-phospho-2'-deoxyribonucleoside-DNA + H(+). Involved in base excision repair of DNA damaged by oxidation or by mutagenic agents. Acts as a DNA glycosylase that recognizes and removes damaged bases. Has a preference for oxidized purines, such as 7,8-dihydro-8-oxoguanine (8-oxoG). Has AP (apurinic/apyrimidinic) lyase activity and introduces nicks in the DNA strand. Cleaves the DNA backbone by beta-delta elimination to generate a single-strand break at the site of the removed base with both 3'- and 5'-phosphates. This chain is Formamidopyrimidine-DNA glycosylase, found in Pseudomonas fluorescens (strain ATCC BAA-477 / NRRL B-23932 / Pf-5).